Reading from the N-terminus, the 184-residue chain is Probable RNA 2'-phosphotransferase (184 aa).

It belongs to the KptA/TPT1 family.

Its function is as follows. Removes the 2'-phosphate from RNA via an intermediate in which the phosphate is ADP-ribosylated by NAD followed by a presumed transesterification to release the RNA and generate ADP-ribose 1''-2''-cyclic phosphate (APPR&gt;P). May function as an ADP-ribosylase. The polypeptide is Probable RNA 2'-phosphotransferase (Rhizobium leguminosarum bv. trifolii (strain WSM2304)).